Here is a 214-residue protein sequence, read N- to C-terminus: Orotate phosphoribosyltransferase (214 aa).

K26 contacts 5-phospho-alpha-D-ribose 1-diphosphate. 34–35 (FF) contacts orotate. 5-phospho-alpha-D-ribose 1-diphosphate-binding positions include 72–73 (YK), R99, K100, K103, H105, and 124–132 (DDVITAGTA). 2 residues coordinate orotate: T128 and R156.

It belongs to the purine/pyrimidine phosphoribosyltransferase family. PyrE subfamily. In terms of assembly, homodimer. Mg(2+) serves as cofactor.

It carries out the reaction orotidine 5'-phosphate + diphosphate = orotate + 5-phospho-alpha-D-ribose 1-diphosphate. Its pathway is pyrimidine metabolism; UMP biosynthesis via de novo pathway; UMP from orotate: step 1/2. Catalyzes the transfer of a ribosyl phosphate group from 5-phosphoribose 1-diphosphate to orotate, leading to the formation of orotidine monophosphate (OMP). In Proteus mirabilis (strain HI4320), this protein is Orotate phosphoribosyltransferase.